Consider the following 321-residue polypeptide: Glycerol-3-phosphate dehydrogenase [NAD(P)+] (321 aa).

Residues serine 14, phenylalanine 15, arginine 35, and lysine 109 each contribute to the NADPH site. Sn-glycerol 3-phosphate contacts are provided by lysine 109 and glycine 137. Alanine 141 lines the NADPH pocket. Lysine 192, aspartate 252, serine 262, arginine 263, and asparagine 264 together coordinate sn-glycerol 3-phosphate. Catalysis depends on lysine 192, which acts as the Proton acceptor. Arginine 263 contributes to the NADPH binding site. NADPH contacts are provided by leucine 287 and glutamate 289.

The protein belongs to the NAD-dependent glycerol-3-phosphate dehydrogenase family.

It is found in the cytoplasm. The catalysed reaction is sn-glycerol 3-phosphate + NAD(+) = dihydroxyacetone phosphate + NADH + H(+). The enzyme catalyses sn-glycerol 3-phosphate + NADP(+) = dihydroxyacetone phosphate + NADPH + H(+). Its pathway is membrane lipid metabolism; glycerophospholipid metabolism. In terms of biological role, catalyzes the reduction of the glycolytic intermediate dihydroxyacetone phosphate (DHAP) to sn-glycerol 3-phosphate (G3P), the key precursor for phospholipid synthesis. The polypeptide is Glycerol-3-phosphate dehydrogenase [NAD(P)+] (Rickettsia felis (strain ATCC VR-1525 / URRWXCal2) (Rickettsia azadi)).